The primary structure comprises 279 residues: Large ribosomal subunit protein uL2 (279 aa).

The segment at 223–279 (MAMNPVDHPMGGGEGKSKSGGGRKHPKSPWGQLAKGLKTRNKKKASTKLIVRGRKAK) is disordered. The segment covering 232–242 (MGGGEGKSKSG) has biased composition (gly residues). The span at 259 to 279 (LKTRNKKKASTKLIVRGRKAK) shows a compositional bias: basic residues.

Belongs to the universal ribosomal protein uL2 family. Part of the 50S ribosomal subunit. Forms a bridge to the 30S subunit in the 70S ribosome.

In terms of biological role, one of the primary rRNA binding proteins. Required for association of the 30S and 50S subunits to form the 70S ribosome, for tRNA binding and peptide bond formation. It has been suggested to have peptidyltransferase activity; this is somewhat controversial. Makes several contacts with the 16S rRNA in the 70S ribosome. The sequence is that of Large ribosomal subunit protein uL2 from Chlorobaculum tepidum (strain ATCC 49652 / DSM 12025 / NBRC 103806 / TLS) (Chlorobium tepidum).